A 158-amino-acid chain; its full sequence is Cyclic pyranopterin monophosphate synthase (158 aa).

Substrate-binding positions include 75 to 77 (LCH) and 113 to 114 (ME). The active site involves aspartate 128.

Belongs to the MoaC family. Homohexamer; trimer of dimers.

It carries out the reaction (8S)-3',8-cyclo-7,8-dihydroguanosine 5'-triphosphate = cyclic pyranopterin phosphate + diphosphate. Its pathway is cofactor biosynthesis; molybdopterin biosynthesis. Its function is as follows. Catalyzes the conversion of (8S)-3',8-cyclo-7,8-dihydroguanosine 5'-triphosphate to cyclic pyranopterin monophosphate (cPMP). The protein is Cyclic pyranopterin monophosphate synthase of Histophilus somni (strain 2336) (Haemophilus somnus).